Here is a 629-residue protein sequence, read N- to C-terminus: MENSTTTISREELEELQEAFNKIDIDNSGYVSDYELQDLFKEASLPLPGYKVREIVEKILSVADSNKDGKISFEEFVSLMQELKSKDISKTFRKIINKREGITAIGGTSTISSEGTQHSYSEEEKVAFVNWINKALENDPDCKHLIPMNPNDDSLFKSLADGILLCKMINLSEPDTIDERAINKKKLTPFTISENLNLALNSASAIGCTVVNIGASDLKEGKPHLVLGLLWQIIKVGLFADIEISRNEALIALLNEGEELEELMKLSPEELLLRWVNYHLTNAGWHTISNFSQDIKDSRAYFHLLNQIAPKGGEDGPAIAIDLSGINETNDLKRAGLMLQEADKLGCKQFVTPADVVSGNPKLNLAFVANLFNTYPCLHKPNNNDIDMNLLEGESKEERTFRNWMNSLGVNPYINHLYSDLADALVIFQLYEMIRVPVNWSHVNKPPYPALGGNMKKIENCNYAVELGKNKAKFSLVGIAGQDLNEGNSTLTLALVWQLMRRYTLNVLSDLGEGEKVNDEIIIKWVNQTLKSANKKTSISSFKDKSISTSLPVLDLIDAIAPNAVRQEMIRRENLSDEDKLNNAKYAISVARKIGARIYALPDDLVEVKPKMVMTVFACLMGKGLNRIK.

Met-1 bears the N-acetylmethionine mark. 2 EF-hand domains span residues 11–46 (EELE…ASLP) and 51–86 (KVRE…LKSK). 10 residues coordinate Ca(2+): Asp-24, Asp-26, Ser-28, Tyr-30, Glu-35, Asp-64, Asn-66, Asp-68, Lys-70, and Glu-75. 2 actin-binding regions span residues 108–380 (TSTI…CLHK) and 381–625 (PNNN…GKGL). Calponin-homology (CH) domains are found at residues 122 to 238 (EEEK…KVGL), 266 to 376 (LSPE…NTYP), 395 to 504 (SKEE…RRYT), and 516 to 625 (KVND…GKGL).

In terms of assembly, monomer. Post-translationally, phosphorylated. In small intestine, colon, and kidney; relatively lower levels of expression are detected in the lung and stomach.

Its subcellular location is the cytoplasm. It localises to the cell projection. The protein localises to the stereocilium. Actin-bundling protein. In the inner ear, it is required for stereocilia formation. Mediates liquid packing of actin filaments that is necessary for stereocilia to grow to their proper dimensions. This chain is Plastin-1 (PLS1), found in Homo sapiens (Human).